A 353-amino-acid polypeptide reads, in one-letter code: Quinolinate synthase (353 aa).

Positions 49 and 70 each coordinate iminosuccinate. Cysteine 115 is a binding site for [4Fe-4S] cluster. Residues 141–143 (YAN) and serine 158 each bind iminosuccinate. Residue cysteine 202 coordinates [4Fe-4S] cluster. Iminosuccinate contacts are provided by residues 228-230 (HPE) and threonine 245. Residue cysteine 299 participates in [4Fe-4S] cluster binding.

Belongs to the quinolinate synthase family. Type 1 subfamily. [4Fe-4S] cluster serves as cofactor.

It localises to the cytoplasm. It carries out the reaction iminosuccinate + dihydroxyacetone phosphate = quinolinate + phosphate + 2 H2O + H(+). It functions in the pathway cofactor biosynthesis; NAD(+) biosynthesis; quinolinate from iminoaspartate: step 1/1. Catalyzes the condensation of iminoaspartate with dihydroxyacetone phosphate to form quinolinate. The sequence is that of Quinolinate synthase from Hahella chejuensis (strain KCTC 2396).